Consider the following 78-residue polypeptide: NAD(P)H-quinone oxidoreductase subunit O (78 aa).

It belongs to the complex I NdhO subunit family. As to quaternary structure, NDH-1 can be composed of about 15 different subunits; different subcomplexes with different compositions have been identified which probably have different functions.

The protein resides in the cellular thylakoid membrane. It carries out the reaction a plastoquinone + NADH + (n+1) H(+)(in) = a plastoquinol + NAD(+) + n H(+)(out). It catalyses the reaction a plastoquinone + NADPH + (n+1) H(+)(in) = a plastoquinol + NADP(+) + n H(+)(out). Its function is as follows. NDH-1 shuttles electrons from an unknown electron donor, via FMN and iron-sulfur (Fe-S) centers, to quinones in the respiratory and/or the photosynthetic chain. The immediate electron acceptor for the enzyme in this species is believed to be plastoquinone. Couples the redox reaction to proton translocation, and thus conserves the redox energy in a proton gradient. Cyanobacterial NDH-1 also plays a role in inorganic carbon-concentration. The sequence is that of NAD(P)H-quinone oxidoreductase subunit O from Prochlorococcus marinus (strain MIT 9215).